The primary structure comprises 214 residues: Probable nicotinate-nucleotide adenylyltransferase (214 aa).

Belongs to the NadD family.

It catalyses the reaction nicotinate beta-D-ribonucleotide + ATP + H(+) = deamido-NAD(+) + diphosphate. It functions in the pathway cofactor biosynthesis; NAD(+) biosynthesis; deamido-NAD(+) from nicotinate D-ribonucleotide: step 1/1. Catalyzes the reversible adenylation of nicotinate mononucleotide (NaMN) to nicotinic acid adenine dinucleotide (NaAD). This chain is Probable nicotinate-nucleotide adenylyltransferase, found in Pseudomonas paraeruginosa (strain DSM 24068 / PA7) (Pseudomonas aeruginosa (strain PA7)).